We begin with the raw amino-acid sequence, 582 residues long: Vesicular glutamate transporter 2 (582 aa).

Residues 1-71 are Cytoplasmic-facing; that stretch reads MESVKQRILA…CTCFGLPRRY (71 aa). The chain crosses the membrane as a helical span at residues 72 to 92; it reads IIAIMSGLGFCISFGIRCNLG. At 93–125 the chain is on the vesicular side; that stretch reads VAIVDMVNNSTIHRGGKVIKEKAKFNWDPETVG. Residues Asn-100 and Asn-101 are each glycosylated (N-linked (GlcNAc...) asparagine). A helical transmembrane segment spans residues 126–146; the sequence is MIHGSFFWGYIITQIPGGYIA. At 147–148 the chain is on the cytoplasmic side; sequence SR. Residues 149 to 169 traverse the membrane as a helical segment; the sequence is LAANRVFGAAILLTSTLNMLI. The Vesicular portion of the chain corresponds to 170–177; it reads PSAARVHY. Residues 178-198 form a helical membrane-spanning segment; the sequence is GCVIFVRILQGLVEGVTYPAC. Topologically, residues 199–216 are cytoplasmic; it reads HGIWSKWAPPLERSRLAT. Residues 217 to 237 form a helical membrane-spanning segment; that stretch reads TSFCGSYAGAVIAMPLAGILV. Residues 238–244 are Vesicular-facing; that stretch reads QYTGWSS. The helical transmembrane segment at 245–265 threads the bilayer; sequence VFYVYGSFGMVWYMFWLLVSY. Topologically, residues 266-310 are cytoplasmic; the sequence is ESPAKHPTITDEERRYIEESIGESANLLGAMEKFKTPWRKFFTSM. A helical membrane pass occupies residues 311 to 331; it reads PVYAIIVANFCRSWTFYLLLI. Residues 332–349 lie on the Vesicular side of the membrane; the sequence is SQPAYFEEVFGFEISKVG. Residues 350-370 traverse the membrane as a helical segment; that stretch reads MLSAVPHLVMTIIVPIGGQIA. Topologically, residues 371-386 are cytoplasmic; sequence DFLRSKQILSTTTVRK. The chain crosses the membrane as a helical span at residues 387–407; that stretch reads IMNCGGFGMEATLLLVVGYSH. At 408-409 the chain is on the vesicular side; the sequence is TR. The helical transmembrane segment at 410–430 threads the bilayer; the sequence is GVAISFLVLAVGFSGFAISGF. Over 431–443 the chain is Cytoplasmic; the sequence is NVNHLDIAPRYAS. Residues 444–464 traverse the membrane as a helical segment; sequence ILMGISDGVGTLSGMVCPIIV. The Vesicular portion of the chain corresponds to 465–477; sequence GAMTKNKSREEWQ. N-linked (GlcNAc...) asparagine glycosylation occurs at Asn-470. The chain crosses the membrane as a helical span at residues 478 to 498; the sequence is YVFLIAALVHYGGVIFYALFA. Residues 499-582 are Cytoplasmic-facing; it reads SGEKQPWADP…YTYKDRDDYS (84 aa).

It belongs to the major facilitator superfamily. Sodium/anion cotransporter family. VGLUT subfamily. As to expression, expressed in brain. Expressed in hippocampal neurons (at protein level).

Its subcellular location is the cytoplasmic vesicle. It localises to the secretory vesicle. The protein localises to the synaptic vesicle membrane. The protein resides in the synapse. It is found in the synaptosome. Its subcellular location is the cell membrane. The catalysed reaction is L-glutamate(out) = L-glutamate(in). It catalyses the reaction K(+)(in) + H(+)(out) = K(+)(out) + H(+)(in). The enzyme catalyses 3 Na(+)(out) + phosphate(out) = 3 Na(+)(in) + phosphate(in). It carries out the reaction phosphate(in) = phosphate(out). The catalysed reaction is chloride(in) = chloride(out). Chloride channel activity is allosterically activated by lumenal H(+) and Cl(-) leading to synaptic vesicles acidification. The L-glutamate transport activity is allosterically activated by lumenal H(+) and Cl(-). The allosteric requirement for H(+) efficiently prevents non-vesicular efflux across the plasma membrane. The L-glutamate uniporter activity exhibits a biphasic dependence on chloride concentration. In terms of biological role, multifunctional transporter that transports L-glutamate as well as multiple ions such as chloride, proton, potassium, sodium and phosphate. At the synaptic vesicle membrane, mainly functions as a uniporter which transports preferentially L-glutamate but also, phosphate from the cytoplasm into synaptic vesicles at presynaptic nerve terminals of excitatory neural cells. The L-glutamate or phosphate uniporter activity is electrogenic and is driven by the proton electrochemical gradient, mainly by the electrical gradient established by the vacuolar H(+)-ATPase across the synaptic vesicle membrane. In addition, functions as a chloride channel that allows a chloride permeation through the synaptic vesicle membrane therefore affects the proton electrochemical gradient and promotes synaptic vesicles acidification. Moreover, functions as a vesicular K(+)/H(+) antiport allowing to maintain the electrical gradient and to decrease chemical gradient and therefore sustain vesicular glutamate uptake. The vesicular H(+)/H(+) antiport activity is electroneutral. At the plasma membrane, following exocytosis, functions as a symporter of Na(+) and phosphate from the extracellular space to the cytoplasm allowing synaptic phosphate homeostasis regulation. The symporter activity is driven by an inside negative membrane potential and is electrogenic. Also involved in the regulation of retinal hyaloid vessel regression during postnatal development. May also play a role in the endocrine glutamatergic system of other tissues such as pineal gland and pancreas. This Mus musculus (Mouse) protein is Vesicular glutamate transporter 2.